Reading from the N-terminus, the 349-residue chain is Ion-translocating oxidoreductase complex subunit D (349 aa).

A run of 3 helical transmembrane segments spans residues 20-42 (VMQR…FGWG), 77-99 (SAML…WMIV), and 124-144 (AMAA…TWIA). Threonine 185 is modified (FMN phosphoryl threonine). 5 helical membrane-spanning segments follow: residues 212–232 (STGV…LVLL), 239–259 (WHIS…GFLL), 265–285 (ASPL…FIAT), 291–311 (ATSP…VYII), and 315–335 (GGYP…APFI).

Belongs to the NqrB/RnfD family. The complex is composed of six subunits: RnfA, RnfB, RnfC, RnfD, RnfE and RnfG. Requires FMN as cofactor.

Its subcellular location is the cell inner membrane. Functionally, part of a membrane-bound complex that couples electron transfer with translocation of ions across the membrane. The chain is Ion-translocating oxidoreductase complex subunit D from Shewanella baltica (strain OS195).